Here is a 417-residue protein sequence, read N- to C-terminus: Probable phosphoglycerate kinase (417 aa).

14 residues coordinate (2R)-3-phosphoglycerate: V23, D24, F25, N26, Q38, R39, S62, H63, G65, R66, L121, R122, H169, and R170. G213 serves as a coordination point for ADP. G213 contacts CDP. Residues A214 and K215 each coordinate AMP. A214 lines the ATP pocket. A214 provides a ligand contact to Mg(2+). Mg(2+) is bound by residues A217 and D218. Residue D218 participates in CDP binding. An AMP-binding site is contributed by K219. K219 lines the ATP pocket. G237 is an ADP binding site. Position 237 (G237) interacts with CDP. AMP is bound by residues G238 and G312. ATP-binding residues include G238 and G312. The CDP site is built by G337, A339, and F342. F342 serves as a coordination point for ADP. E343 lines the AMP pocket. E343, D374, and T375 together coordinate ATP. D374 provides a ligand contact to Mg(2+).

This sequence belongs to the phosphoglycerate kinase family. Monomer. The cofactor is Mg(2+).

It is found in the cytoplasm. It carries out the reaction (2R)-3-phosphoglycerate + ATP = (2R)-3-phospho-glyceroyl phosphate + ADP. It functions in the pathway carbohydrate degradation; glycolysis; pyruvate from D-glyceraldehyde 3-phosphate: step 2/5. The polypeptide is Probable phosphoglycerate kinase (pgk-1) (Caenorhabditis elegans).